Consider the following 258-residue polypeptide: Small ribosomal subunit protein mS23 (258 aa).

This sequence belongs to the mitochondrion-specific ribosomal protein mS23 family. As to quaternary structure, component of the mitochondrial small ribosomal subunit.

It is found in the mitochondrion. The chain is Small ribosomal subunit protein mS23 from Aspergillus fumigatus (strain CBS 144.89 / FGSC A1163 / CEA10) (Neosartorya fumigata).